The primary structure comprises 83 residues: High-potential iron-sulfur protein (83 aa).

4 residues coordinate [4Fe-4S] cluster: Cys-43, Cys-46, Cys-61, and Cys-75.

The protein belongs to the high-potential iron-sulfur protein (HiPIP) family. As to quaternary structure, homodimer.

The protein resides in the periplasm. In terms of biological role, specific class of high-redox-potential 4Fe-4S ferredoxins. Functions in anaerobic electron transport in most purple and in some other photosynthetic bacteria and in at least one genus (Paracoccus) of halophilic, denitrifying bacteria. The polypeptide is High-potential iron-sulfur protein (hip) (Marichromatium gracile (Chromatium gracile)).